Here is a 212-residue protein sequence, read N- to C-terminus: ATP synthase F(0) complex subunit a (212 aa).

Transmembrane regions (helical) follow at residues methionine 3–serine 23, tryptophan 58–leucine 78, glutamine 87–leucine 107, isoleucine 128–valine 148, leucine 154–threonine 174, and alanine 179–isoleucine 199.

The protein belongs to the ATPase A chain family. As to quaternary structure, component of the ATP synthase complex composed at least of ATP5F1A/subunit alpha, ATP5F1B/subunit beta, ATP5MC1/subunit c (homooctomer), MT-ATP6/subunit a, MT-ATP8/subunit 8, ATP5ME/subunit e, ATP5MF/subunit f, ATP5MG/subunit g, ATP5MK/subunit k, ATP5MJ/subunit j, ATP5F1C/subunit gamma, ATP5F1D/subunit delta, ATP5F1E/subunit epsilon, ATP5PF/subunit F6, ATP5PB/subunit b, ATP5PD/subunit d, ATP5PO/subunit OSCP. ATP synthase complex consists of a soluble F(1) head domain (subunits alpha(3) and beta(3)) - the catalytic core - and a membrane F(0) domain - the membrane proton channel (subunits c, a, 8, e, f, g, k and j). These two domains are linked by a central stalk (subunits gamma, delta, and epsilon) rotating inside the F1 region and a stationary peripheral stalk (subunits F6, b, d, and OSCP). Interacts with DNAJC30; interaction is direct.

It localises to the mitochondrion inner membrane. The catalysed reaction is H(+)(in) = H(+)(out). Functionally, subunit a, of the mitochondrial membrane ATP synthase complex (F(1)F(0) ATP synthase or Complex V) that produces ATP from ADP in the presence of a proton gradient across the membrane which is generated by electron transport complexes of the respiratory chain. ATP synthase complex consist of a soluble F(1) head domain - the catalytic core - and a membrane F(1) domain - the membrane proton channel. These two domains are linked by a central stalk rotating inside the F(1) region and a stationary peripheral stalk. During catalysis, ATP synthesis in the catalytic domain of F(1) is coupled via a rotary mechanism of the central stalk subunits to proton translocation. With the subunit c (ATP5MC1), forms the proton-conducting channel in the F(0) domain, that contains two crucial half-channels (inlet and outlet) that facilitate proton movement from the mitochondrial intermembrane space (IMS) into the matrix. Protons are taken up via the inlet half-channel and released through the outlet half-channel, following a Grotthuss mechanism. The sequence is that of ATP synthase F(0) complex subunit a from Tropidurus montanus (Lizard).